The primary structure comprises 953 residues: UvrABC system protein A (953 aa).

33-40 (GLSGSGKS) is an ATP binding site. ABC transporter domains lie at 320-599 (WGST…EESI) and 619-949 (GHDN…RYLK). 652–659 (GVSGSGKS) contacts ATP. The C4-type zinc-finger motif lies at 752–778 (CEACQGDGLIKIEMHFLPDVYVKCDIC).

It belongs to the ABC transporter superfamily. UvrA family. In terms of assembly, forms a heterotetramer with UvrB during the search for lesions.

It is found in the cytoplasm. In terms of biological role, the UvrABC repair system catalyzes the recognition and processing of DNA lesions. UvrA is an ATPase and a DNA-binding protein. A damage recognition complex composed of 2 UvrA and 2 UvrB subunits scans DNA for abnormalities. When the presence of a lesion has been verified by UvrB, the UvrA molecules dissociate. This is UvrABC system protein A from Rickettsia prowazekii (strain Madrid E).